The following is a 213-amino-acid chain: Probable nicotinate-nucleotide adenylyltransferase (213 aa).

Belongs to the NadD family.

It carries out the reaction nicotinate beta-D-ribonucleotide + ATP + H(+) = deamido-NAD(+) + diphosphate. The protein operates within cofactor biosynthesis; NAD(+) biosynthesis; deamido-NAD(+) from nicotinate D-ribonucleotide: step 1/1. In terms of biological role, catalyzes the reversible adenylation of nicotinate mononucleotide (NaMN) to nicotinic acid adenine dinucleotide (NaAD). This Shigella boydii serotype 18 (strain CDC 3083-94 / BS512) protein is Probable nicotinate-nucleotide adenylyltransferase.